The primary structure comprises 113 residues: MNTLDFVDQSSLRDDVPAFGPGDTVNVHVKVIEGSKERIQVFKGVVLRRQGGGVRETFTVRKESYGVGVERTFPVHSPNIDHIDIVSRGDVRRAKLYYLRELRGKKAKIKEKR.

Belongs to the bacterial ribosomal protein bL19 family.

This protein is located at the 30S-50S ribosomal subunit interface and may play a role in the structure and function of the aminoacyl-tRNA binding site. This chain is Large ribosomal subunit protein bL19, found in Mycolicibacterium vanbaalenii (strain DSM 7251 / JCM 13017 / BCRC 16820 / KCTC 9966 / NRRL B-24157 / PYR-1) (Mycobacterium vanbaalenii).